A 310-amino-acid chain; its full sequence is Lymphotoxin-beta (310 aa).

At 1–27 (MGALGLQGRGGRPQGTGCLLLAVAGAT) the chain is on the cytoplasmic side. The chain crosses the membrane as a helical; Signal-anchor for type II membrane protein span at residues 28–48 (SLVTLLLAVPITVLAVLALVP). Over 49–310 (QEQGGLVMES…LGKCLHSANV (262 aa)) the chain is Extracellular. The tract at residues 67–86 (QGLSKSNGLPSRLHSQIPSS) is disordered. The THD domain maps to 138–293 (PAAHLIGAWM…GKTFFGAVMV (156 aa)). Residue N272 is glycosylated (N-linked (GlcNAc...) asparagine).

The protein belongs to the tumor necrosis factor family. Heterotrimer of either two LTB and one LTA subunits or (less prevalent) two LTA and one LTB subunits.

Its subcellular location is the membrane. Functionally, cytokine that binds to LTBR/TNFRSF3. May play a specific role in immune response regulation. Provides the membrane anchor for the attachment of the heterotrimeric complex to the cell surface. This chain is Lymphotoxin-beta (LTB), found in Marmota monax (Woodchuck).